The following is a 400-amino-acid chain: Argininosuccinate synthase (400 aa).

Residues 10 to 18 (AYSGGVDTS) and Ala38 each bind ATP. Tyr89 serves as a coordination point for L-citrulline. Gly119 is an ATP binding site. Residues Thr121, Asn125, and Asp126 each coordinate L-aspartate. Asn125 contacts L-citrulline. Arg129, Ser177, Ser186, Glu262, and Tyr274 together coordinate L-citrulline.

The protein belongs to the argininosuccinate synthase family. Type 1 subfamily. As to quaternary structure, homotetramer.

Its subcellular location is the cytoplasm. It carries out the reaction L-citrulline + L-aspartate + ATP = 2-(N(omega)-L-arginino)succinate + AMP + diphosphate + H(+). The protein operates within amino-acid biosynthesis; L-arginine biosynthesis; L-arginine from L-ornithine and carbamoyl phosphate: step 2/3. This Prochlorococcus marinus (strain NATL1A) protein is Argininosuccinate synthase.